The sequence spans 236 residues: Small ribosomal subunit protein uS2c (236 aa).

The protein belongs to the universal ribosomal protein uS2 family.

It is found in the plastid. The protein localises to the chloroplast. This is Small ribosomal subunit protein uS2c (rps2) from Manihot esculenta (Cassava).